The following is a 293-amino-acid chain: Formamidopyrimidine-DNA glycosylase (293 aa).

Pro2 acts as the Schiff-base intermediate with DNA in catalysis. Glu3 (proton donor) is an active-site residue. The Proton donor; for beta-elimination activity role is filled by Lys60. The DNA site is built by His110, Arg129, and Arg174. The segment at 259–293 (NVYRRTGKECRKCGNLIEKQKIAGRSTHWCPNCQK) adopts an FPG-type zinc-finger fold. The Proton donor; for delta-elimination activity role is filled by Arg283.

Belongs to the FPG family. In terms of assembly, monomer. It depends on Zn(2+) as a cofactor.

It catalyses the reaction Hydrolysis of DNA containing ring-opened 7-methylguanine residues, releasing 2,6-diamino-4-hydroxy-5-(N-methyl)formamidopyrimidine.. The catalysed reaction is 2'-deoxyribonucleotide-(2'-deoxyribose 5'-phosphate)-2'-deoxyribonucleotide-DNA = a 3'-end 2'-deoxyribonucleotide-(2,3-dehydro-2,3-deoxyribose 5'-phosphate)-DNA + a 5'-end 5'-phospho-2'-deoxyribonucleoside-DNA + H(+). Its function is as follows. Involved in base excision repair of DNA damaged by oxidation or by mutagenic agents. Acts as a DNA glycosylase that recognizes and removes damaged bases. Has a preference for oxidized purines, such as 7,8-dihydro-8-oxoguanine (8-oxoG). Has AP (apurinic/apyrimidinic) lyase activity and introduces nicks in the DNA strand. Cleaves the DNA backbone by beta-delta elimination to generate a single-strand break at the site of the removed base with both 3'- and 5'-phosphates. This is Formamidopyrimidine-DNA glycosylase from Prochlorococcus marinus (strain MIT 9312).